The primary structure comprises 344 residues: GTPase Obg (344 aa).

Residues 1-159 form the Obg domain; that stretch reads MKFLDEAKVY…MWLILRLKLI (159 aa). The OBG-type G domain maps to 160 to 327; that stretch reads ADAGLVGLPN…ALRAIQAQLD (168 aa). GTP is bound by residues 166-173, 191-195, 212-215, 279-282, and 308-310; these read GLPNAGKS, FTTLH, DIPG, SKAD, and SAA. Positions 173 and 193 each coordinate Mg(2+).

This sequence belongs to the TRAFAC class OBG-HflX-like GTPase superfamily. OBG GTPase family. As to quaternary structure, monomer. The cofactor is Mg(2+).

The protein localises to the cytoplasm. Functionally, an essential GTPase which binds GTP, GDP and possibly (p)ppGpp with moderate affinity, with high nucleotide exchange rates and a fairly low GTP hydrolysis rate. Plays a role in control of the cell cycle, stress response, ribosome biogenesis and in those bacteria that undergo differentiation, in morphogenesis control. The polypeptide is GTPase Obg (Methylorubrum extorquens (strain CM4 / NCIMB 13688) (Methylobacterium extorquens)).